The sequence spans 130 residues: Peptide methionine sulfoxide reductase MsrB (130 aa).

Residues 8-130 form the MsrB domain; it reads LEEWRSMLDP…NSVCLDLVPR (123 aa). Zn(2+)-binding residues include Cys-47, Cys-50, Cys-96, and Cys-99. Cys-119 (nucleophile) is an active-site residue.

The protein belongs to the MsrB Met sulfoxide reductase family. Zn(2+) serves as cofactor.

It catalyses the reaction L-methionyl-[protein] + [thioredoxin]-disulfide + H2O = L-methionyl-(R)-S-oxide-[protein] + [thioredoxin]-dithiol. In Pseudomonas fluorescens (strain ATCC BAA-477 / NRRL B-23932 / Pf-5), this protein is Peptide methionine sulfoxide reductase MsrB.